The primary structure comprises 460 residues: Argininosuccinate lyase (460 aa).

It belongs to the lyase 1 family. Argininosuccinate lyase subfamily.

The protein resides in the cytoplasm. The catalysed reaction is 2-(N(omega)-L-arginino)succinate = fumarate + L-arginine. The protein operates within amino-acid biosynthesis; L-arginine biosynthesis; L-arginine from L-ornithine and carbamoyl phosphate: step 3/3. The protein is Argininosuccinate lyase of Campylobacter jejuni (strain RM1221).